The following is a 117-amino-acid chain: Photosystem II reaction center Psb28 protein (117 aa).

The protein belongs to the Psb28 family. As to quaternary structure, part of the photosystem II complex.

It localises to the cellular thylakoid membrane. The polypeptide is Photosystem II reaction center Psb28 protein (Prochlorococcus marinus (strain MIT 9215)).